The sequence spans 556 residues: Potassium-transporting ATPase potassium-binding subunit (556 aa).

Transmembrane regions (helical) follow at residues Ala6–Gly26, Ser65–Gly85, Gly133–Val153, Leu176–Ile196, Pro249–Pro269, Ala283–Phe303, Gly378–Gly398, Tyr419–Gly439, Ala483–Ala503, and Phe526–Leu546.

Belongs to the KdpA family. In terms of assembly, the system is composed of three essential subunits: KdpA, KdpB and KdpC.

The protein localises to the cell membrane. Its function is as follows. Part of the high-affinity ATP-driven potassium transport (or Kdp) system, which catalyzes the hydrolysis of ATP coupled with the electrogenic transport of potassium into the cytoplasm. This subunit binds the extracellular potassium ions and delivers the ions to the membrane domain of KdpB through an intramembrane tunnel. The chain is Potassium-transporting ATPase potassium-binding subunit from Mycobacterium sp. (strain KMS).